The chain runs to 387 residues: Chorismate synthase (387 aa).

Positions 39 and 45 each coordinate NADP(+). Residues 92-113 are disordered; the sequence is PVEEGSEEKRRVSRPRPGHADL. FMN-binding positions include 130 to 132, 250 to 251, glycine 295, 310 to 314, and arginine 336; these read RSS, QA, and KPIPT.

The protein belongs to the chorismate synthase family. As to quaternary structure, homotetramer. FMNH2 serves as cofactor.

It carries out the reaction 5-O-(1-carboxyvinyl)-3-phosphoshikimate = chorismate + phosphate. It participates in metabolic intermediate biosynthesis; chorismate biosynthesis; chorismate from D-erythrose 4-phosphate and phosphoenolpyruvate: step 7/7. In terms of biological role, catalyzes the anti-1,4-elimination of the C-3 phosphate and the C-6 proR hydrogen from 5-enolpyruvylshikimate-3-phosphate (EPSP) to yield chorismate, which is the branch point compound that serves as the starting substrate for the three terminal pathways of aromatic amino acid biosynthesis. This reaction introduces a second double bond into the aromatic ring system. In Brevibacillus brevis (strain 47 / JCM 6285 / NBRC 100599), this protein is Chorismate synthase.